A 200-amino-acid chain; its full sequence is MSYLVPMVVEQTNRGERSYDIYSRLLKDRIIFLGSGIDDTVANLVIAQLLFLEAEDPDKDISLYINSPGGSITAGMAIYDTLQYIRPDVSTICVGLAASMGAFLLAAGKKGKRYALPNAEIMIHQPAGGTQGQATDIEIHARRIMNMKESLNKILAERTGQPLERIQKDTDRDYFMTAQEAKEYGIIDEVISHPKKTSKK.

Residue Ser-99 is the Nucleophile of the active site. His-124 is a catalytic residue.

Belongs to the peptidase S14 family. In terms of assembly, fourteen ClpP subunits assemble into 2 heptameric rings which stack back to back to give a disk-like structure with a central cavity, resembling the structure of eukaryotic proteasomes.

Its subcellular location is the cytoplasm. It catalyses the reaction Hydrolysis of proteins to small peptides in the presence of ATP and magnesium. alpha-casein is the usual test substrate. In the absence of ATP, only oligopeptides shorter than five residues are hydrolyzed (such as succinyl-Leu-Tyr-|-NHMec, and Leu-Tyr-Leu-|-Tyr-Trp, in which cleavage of the -Tyr-|-Leu- and -Tyr-|-Trp bonds also occurs).. In terms of biological role, cleaves peptides in various proteins in a process that requires ATP hydrolysis. Has a chymotrypsin-like activity. Plays a major role in the degradation of misfolded proteins. This Syntrophomonas wolfei subsp. wolfei (strain DSM 2245B / Goettingen) protein is ATP-dependent Clp protease proteolytic subunit.